A 316-amino-acid polypeptide reads, in one-letter code: Golgi to ER traffic protein 2 (316 aa).

The disordered stretch occupies residues 1 to 75; that stretch reads MATELSDAEK…SDEEVEKSTK (75 aa). The Cytoplasmic portion of the chain corresponds to 1–167; sequence MATELSDAEK…LKYYKFKVSK (167 aa). Residues 7–19 show a composition bias toward basic and acidic residues; sequence DAEKRKLLRERRQ. Composition is skewed to polar residues over residues 22-48 and 56-65; these read FSNGGASSRLNKITGQQQNSFLSSTSV and PSGNKKSSNV. The helical transmembrane segment at 168-187 threads the bilayer; the sequence is LKSYIILIKWALLAPYVYFI. The Lumenal portion of the chain corresponds to 188-209; it reads MHPNPTVLQASNLLSQIVERSN. Residues 210 to 229 traverse the membrane as a helical segment; the sequence is FFSIFTGLEIVFISIYYQML. Topologically, residues 230-276 are cytoplasmic; the sequence is KKLQRDNNVTATQNAGGILKYLTMIPEGILPIRNIQGKIGLALEYFD. The chain crosses the membrane as a helical span at residues 277-297; it reads VASMYVTDICFVLVLFGVMKY. Residues 298-316 are Lumenal-facing; that stretch reads YHSSFPISVPIEPPIAGIQ.

It belongs to the GET2 family. Component of the Golgi to ER traffic (GET) complex, which is composed of GET1, GET2 and GET3. Within the complex, GET1 and GET2 form a heterotetramer which is stabilized by phosphatidylinositol binding and which binds to the GET3 homodimer.

The protein localises to the endoplasmic reticulum membrane. It is found in the golgi apparatus membrane. In terms of biological role, required for the post-translational delivery of tail-anchored (TA) proteins to the endoplasmic reticulum. Together with GET1, acts as a membrane receptor for soluble GET3, which recognizes and selectively binds the transmembrane domain of TA proteins in the cytosol. The GET complex cooperates with the HDEL receptor ERD2 to mediate the ATP-dependent retrieval of resident ER proteins that contain a C-terminal H-D-E-L retention signal from the Golgi to the ER. This chain is Golgi to ER traffic protein 2, found in Kluyveromyces lactis (strain ATCC 8585 / CBS 2359 / DSM 70799 / NBRC 1267 / NRRL Y-1140 / WM37) (Yeast).